Here is a 233-residue protein sequence, read N- to C-terminus: Nickel import system ATP-binding protein NikE (233 aa).

The ABC transporter domain occupies 2–228 (IELKHVTFGY…DRHPYTKELV (227 aa)). 35–42 (GESGCGKS) lines the ATP pocket.

It belongs to the ABC transporter superfamily. In terms of assembly, the complex is composed of two ATP-binding proteins (NikD and NikE), two transmembrane proteins (NikB and NikC) and a solute-binding protein (NikA).

The protein resides in the cell membrane. The catalysed reaction is Ni(2+)(out) + ATP + H2O = Ni(2+)(in) + ADP + phosphate + H(+). Its function is as follows. Part of the ABC transporter complex NikABCDE (Opp2) involved in nickel import. Probably responsible for energy coupling to the transport system. This chain is Nickel import system ATP-binding protein NikE, found in Staphylococcus aureus (strain MRSA252).